Reading from the N-terminus, the 872-residue chain is Alanine--tRNA ligase (872 aa).

The Zn(2+) site is built by His-567, His-571, Cys-669, and His-673.

Belongs to the class-II aminoacyl-tRNA synthetase family. Zn(2+) is required as a cofactor.

It localises to the cytoplasm. It carries out the reaction tRNA(Ala) + L-alanine + ATP = L-alanyl-tRNA(Ala) + AMP + diphosphate. In terms of biological role, catalyzes the attachment of alanine to tRNA(Ala) in a two-step reaction: alanine is first activated by ATP to form Ala-AMP and then transferred to the acceptor end of tRNA(Ala). Also edits incorrectly charged Ser-tRNA(Ala) and Gly-tRNA(Ala) via its editing domain. This is Alanine--tRNA ligase from Streptococcus agalactiae serotype V (strain ATCC BAA-611 / 2603 V/R).